A 681-amino-acid chain; its full sequence is Protein asunder (681 aa).

Residues 574–619 (PGASHLRSYTESPLSPERLEPTSSASNSSSSILKASKRRMSSSGQR) form a disordered region. The Nuclear localization signal (NLS) motif lies at 606 to 612 (LKASKRR).

The protein belongs to the Integrator subunit 13 family. As to quaternary structure, belongs to the multiprotein complex Integrator, at least composed of IntS1, IntS2, IntS3, IntS4, omd/IntS5, IntS6, defl/IntS7, IntS8, IntS9, IntS10, IntS11, IntS12, asun/IntS13, IntS14 and IntS15. The core complex associates with protein phosphatase 2A subunits mts/PP2A and Pp2A-29B, to form the Integrator-PP2A (INTAC) complex. Phosphorylated.

The protein localises to the nucleus. It localises to the cytoplasm. It is found in the perinuclear region. In terms of biological role, component of the integrator complex, a multiprotein complex that terminates RNA polymerase II (Pol II) transcription in the promoter-proximal region of genes. The integrator complex provides a quality checkpoint during transcription elongation by driving premature transcription termination of transcripts that are unfavorably configured for transcriptional elongation: the complex terminates transcription by (1) catalyzing dephosphorylation of the C-terminal domain (CTD) of Pol II subunit Polr2A/Rbp1 and Spt5, and (2) degrading the exiting nascent RNA transcript via endonuclease activity. The integrator complex is also involved in the 3'-end processing of the U7 snRNA, and also the spliceosomal snRNAs U1, U2, U4 and U5. In Drosophila virilis (Fruit fly), this protein is Protein asunder (asun).